We begin with the raw amino-acid sequence, 321 residues long: MIKKIAVLTSGGDAPGMNAAIRGVVRSALFEGLEVFGVYDGYYGLYHNKIKQLNRYSVSDVITRGGTFLGSARFPEFKNPEVRAKCAEILRSHGIDALVVIGGDGSYTGAKLLTEEHGIQCIGLPGTIDNDAPGTDYTIGYQTALETAVDAIDRLRDTSSSHQRISIVEIMGRHCSDLTINAALAGGCEYIVASEVEFDQEELIQQIERSIANGKRHAIIAITELITDVHELAKRIEERVHHETRATVLGHVQRGGSPCAFDRILASRMGVYAVDLLLQGKGGYCVGIQNEQLVHHDIIDAINNMRRSFKAELLDMNERLF.

Gly-12 is an ATP binding site. ADP contacts are provided by residues 22 to 26 (RGVVR) and 55 to 60 (RYSVSD). Residues 73-74 (RF) and 103-106 (GDGS) each bind ATP. Residue Asp-104 coordinates Mg(2+). Position 127–129 (127–129 (TID)) interacts with substrate. Asp-129 acts as the Proton acceptor in catalysis. ADP is bound at residue Arg-156. Substrate is bound by residues Arg-164 and 171-173 (MGR). Residues 187 to 189 (GCE) and 215 to 217 (KRH) each bind ADP. Substrate is bound by residues Glu-224, Arg-245, and 251–254 (HVQR).

It belongs to the phosphofructokinase type A (PFKA) family. ATP-dependent PFK group I subfamily. Prokaryotic clade 'B1' sub-subfamily. As to quaternary structure, homotetramer. Mg(2+) is required as a cofactor.

It is found in the cytoplasm. It catalyses the reaction beta-D-fructose 6-phosphate + ATP = beta-D-fructose 1,6-bisphosphate + ADP + H(+). It participates in carbohydrate degradation; glycolysis; D-glyceraldehyde 3-phosphate and glycerone phosphate from D-glucose: step 3/4. Its activity is regulated as follows. Allosterically activated by ADP and other diphosphonucleosides, and allosterically inhibited by phosphoenolpyruvate. Functionally, catalyzes the phosphorylation of D-fructose 6-phosphate to fructose 1,6-bisphosphate by ATP, the first committing step of glycolysis. The protein is ATP-dependent 6-phosphofructokinase of Mannheimia succiniciproducens (strain KCTC 0769BP / MBEL55E).